A 715-amino-acid chain; its full sequence is Poly(A) polymerase alpha-A (715 aa).

Residues 82 to 84 (FGP), Thr-91, 95 to 97 (DID), Asp-149, Lys-210, Tyr-219, and 228 to 229 (GV) each bind ATP. Residues Asp-95, Asp-97, and Asp-149 each coordinate Mg(2+). The Nuclear localization signal 1 signature appears at 472 to 489 (RKQLHQLQPSHVSPKKKK). Disordered stretches follow at residues 510 to 543 (DSDN…PAAP), 560 to 590 (QNNS…TPKP), and 607 to 693 (KPVS…DLSD). Polar residues-rich tracts occupy residues 515 to 539 (MSVP…QGNS) and 560 to 588 (QNNS…SSTP). The short motif at 624-639 (KRTSSPSNEDSPKKNK) is the Nuclear localization signal 2 element. Residues 655-673 (DQNKLETEELKEVHSEEKS) are compositionally biased toward basic and acidic residues. Residues 674–692 (SSPVPGSLPFSQQSSTDLS) are compositionally biased toward polar residues.

This sequence belongs to the poly(A) polymerase family. Monomer. The cofactor is Mg(2+). Mn(2+) serves as cofactor.

Its subcellular location is the nucleus. It catalyses the reaction RNA(n) + ATP = RNA(n)-3'-adenine ribonucleotide + diphosphate. Functionally, polymerase that creates the 3'-poly(A) tail of mRNA's. May acquire specificity through interaction with a cleavage and polyadenylation factor (CPSF). This chain is Poly(A) polymerase alpha-A (papola-a), found in Xenopus laevis (African clawed frog).